A 160-amino-acid chain; its full sequence is Phosphopantetheine adenylyltransferase (160 aa).

Serine 9 is a substrate binding site. Residues 9 to 10 (SF) and histidine 17 each bind ATP. Positions 41, 73, and 87 each coordinate substrate. ATP is bound by residues 88–90 (GLR), glutamate 98, and 122–128 (YSFVSSS).

This sequence belongs to the bacterial CoaD family. In terms of assembly, homohexamer. It depends on Mg(2+) as a cofactor.

The protein localises to the cytoplasm. The catalysed reaction is (R)-4'-phosphopantetheine + ATP + H(+) = 3'-dephospho-CoA + diphosphate. Its pathway is cofactor biosynthesis; coenzyme A biosynthesis; CoA from (R)-pantothenate: step 4/5. Functionally, reversibly transfers an adenylyl group from ATP to 4'-phosphopantetheine, yielding dephospho-CoA (dPCoA) and pyrophosphate. The chain is Phosphopantetheine adenylyltransferase from Mycolicibacterium gilvum (strain PYR-GCK) (Mycobacterium gilvum (strain PYR-GCK)).